Consider the following 360-residue polypeptide: Methylthioribose-1-phosphate isomerase (360 aa).

Asp246 serves as the catalytic Proton donor.

This sequence belongs to the eIF-2B alpha/beta/delta subunits family. MtnA subfamily.

The protein localises to the cytoplasm. Its subcellular location is the nucleus. It catalyses the reaction 5-(methylsulfanyl)-alpha-D-ribose 1-phosphate = 5-(methylsulfanyl)-D-ribulose 1-phosphate. The protein operates within amino-acid biosynthesis; L-methionine biosynthesis via salvage pathway; L-methionine from S-methyl-5-thio-alpha-D-ribose 1-phosphate: step 1/6. In terms of biological role, catalyzes the interconversion of methylthioribose-1-phosphate (MTR-1-P) into methylthioribulose-1-phosphate (MTRu-1-P). This is Methylthioribose-1-phosphate isomerase from Aedes aegypti (Yellowfever mosquito).